The primary structure comprises 168 residues: Thiol peroxidase (168 aa).

The 149-residue stretch at 20-168 folds into the Thioredoxin domain; the sequence is PAVGSQLPAF…DYDKALAALA (149 aa). Cys-62 acts as the Cysteine sulfenic acid (-SOH) intermediate in catalysis. Cys-62 and Cys-96 are oxidised to a cystine.

This sequence belongs to the peroxiredoxin family. Tpx subfamily. Homodimer.

It catalyses the reaction a hydroperoxide + [thioredoxin]-dithiol = an alcohol + [thioredoxin]-disulfide + H2O. Its function is as follows. Thiol-specific peroxidase that catalyzes the reduction of hydrogen peroxide and organic hydroperoxides to water and alcohols, respectively. Plays a role in cell protection against oxidative stress by detoxifying peroxides. The chain is Thiol peroxidase from Chlorobaculum tepidum (strain ATCC 49652 / DSM 12025 / NBRC 103806 / TLS) (Chlorobium tepidum).